The primary structure comprises 85 residues: CDC42 small effector protein 2 (85 aa).

S-palmitoyl cysteine attachment occurs at residues C10 and C11. Positions 29–42 (IGEPTNFVHTAHVG) constitute a CRIB domain.

It belongs to the CDC42SE/SPEC family.

Its subcellular location is the cytoplasm. It is found in the cytoskeleton. The protein localises to the cell membrane. Functionally, probably involved in the organization of the actin cytoskeleton by acting downstream of CDC42, inducing actin filament assembly. The polypeptide is CDC42 small effector protein 2 (cdc42se2) (Danio rerio (Zebrafish)).